Reading from the N-terminus, the 324-residue chain is Glutathione synthetase (324 aa).

An ATP-grasp domain is found at glutamate 125–glutamate 312. Phenylalanine 152–glycine 209 provides a ligand contact to ATP. Residues glutamate 283 and asparagine 285 each contribute to the Mg(2+) site.

This sequence belongs to the prokaryotic GSH synthase family. It depends on Mg(2+) as a cofactor. Mn(2+) serves as cofactor.

It carries out the reaction gamma-L-glutamyl-L-cysteine + glycine + ATP = glutathione + ADP + phosphate + H(+). It functions in the pathway sulfur metabolism; glutathione biosynthesis; glutathione from L-cysteine and L-glutamate: step 2/2. The protein is Glutathione synthetase of Buchnera aphidicola subsp. Baizongia pistaciae (strain Bp).